A 216-amino-acid chain; its full sequence is Protein GrpE (216 aa).

Disordered regions lie at residues methionine 1–threonine 45 and arginine 185–valine 216. Residues threonine 205–valine 216 are compositionally biased toward acidic residues.

Belongs to the GrpE family. In terms of assembly, homodimer.

The protein localises to the cytoplasm. In terms of biological role, participates actively in the response to hyperosmotic and heat shock by preventing the aggregation of stress-denatured proteins, in association with DnaK and GrpE. It is the nucleotide exchange factor for DnaK and may function as a thermosensor. Unfolded proteins bind initially to DnaJ; upon interaction with the DnaJ-bound protein, DnaK hydrolyzes its bound ATP, resulting in the formation of a stable complex. GrpE releases ADP from DnaK; ATP binding to DnaK triggers the release of the substrate protein, thus completing the reaction cycle. Several rounds of ATP-dependent interactions between DnaJ, DnaK and GrpE are required for fully efficient folding. The polypeptide is Protein GrpE (Streptomyces griseus subsp. griseus (strain JCM 4626 / CBS 651.72 / NBRC 13350 / KCC S-0626 / ISP 5235)).